Reading from the N-terminus, the 44-residue chain is Cuticle protein CP459 (44 aa).

2 repeat units span residues 3–20 (LLKGPSGVLFEDGQKRLL) and 27–44 (VLLTESGAVLSNGENVQF).

In terms of tissue distribution, calcified shell.

The protein is Cuticle protein CP459 of Cancer pagurus (Rock crab).